The primary structure comprises 345 residues: Homeobox protein DBX1 (345 aa).

Disordered regions lie at residues 55-103 (PRGS…VSPA) and 241-345 (KERE…ITVS). A DNA-binding region (homeobox) is located at residues 182 to 241 (GMLRRAVFSDVQRKALEKMFQKQKYISKPDRKKLAAKLGLKDSQVKIWFQNRRMKWRNSK). The span at 300–309 (DPRHLRDPRL) shows a compositional bias: basic and acidic residues. Positions 330–345 (SDSEDDEEGEEEITVS) are enriched in acidic residues.

It belongs to the H2.0 homeobox family.

Its subcellular location is the nucleus. Could have a role in patterning the central nervous system during embryogenesis. Has a key role in regulating the distinct phenotypic features that distinguish two major classes of ventral interneurons, V0 and V1 neurons. Regulates the transcription factor profile, neurotransmitter phenotype, intraspinal migratory path and axonal trajectory of V0 neurons, features that differentiate them from an adjacent set of V1 neurons. This is Homeobox protein DBX1 (DBX1) from Bos taurus (Bovine).